The sequence spans 345 residues: UDP-N-acetylenolpyruvoylglucosamine reductase (345 aa).

Positions 27-197 (FDASAELAYE…TKVVFKLPKQ (171 aa)) constitute an FAD-binding PCMH-type domain. R174 is an active-site residue. The active-site Proton donor is the S245. Residue E341 is part of the active site.

Belongs to the MurB family. Requires FAD as cofactor.

The protein localises to the cytoplasm. The catalysed reaction is UDP-N-acetyl-alpha-D-muramate + NADP(+) = UDP-N-acetyl-3-O-(1-carboxyvinyl)-alpha-D-glucosamine + NADPH + H(+). Its pathway is cell wall biogenesis; peptidoglycan biosynthesis. Cell wall formation. In Polynucleobacter asymbioticus (strain DSM 18221 / CIP 109841 / QLW-P1DMWA-1) (Polynucleobacter necessarius subsp. asymbioticus), this protein is UDP-N-acetylenolpyruvoylglucosamine reductase.